Reading from the N-terminus, the 205-residue chain is uncharacterized protein (205 aa).

The HTH tetR-type domain maps to 11 to 71; that stretch reads KTRRALVDAA…EMVDEAGLML (61 aa).

This is an uncharacterized protein from Haemophilus influenzae (strain ATCC 51907 / DSM 11121 / KW20 / Rd).